The primary structure comprises 374 residues: Coiled-coil domain-containing protein 89 (374 aa).

Positions 1–40 are disordered; sequence MRAPMLQKQQAPRMDTPPPEERLEKQNEKLNNQEEETEFK. T16 is modified (phosphothreonine). The segment covering 19–32 has biased composition (basic and acidic residues); it reads PEERLEKQNEKLNN. Residues 20–351 are a coiled coil; it reads EERLEKQNEK…DELRLQSEAF (332 aa).

Belongs to the CCDC89 family. In terms of assembly, interacts with HEY1.

The protein localises to the cytoplasm. Its subcellular location is the nucleus. The polypeptide is Coiled-coil domain-containing protein 89 (CCDC89) (Homo sapiens (Human)).